The sequence spans 259 residues: Thiazole synthase (259 aa).

Lysine 99 serves as the catalytic Schiff-base intermediate with DXP. Residues glycine 161, 187–188 (AG), and 209–210 (NT) contribute to the 1-deoxy-D-xylulose 5-phosphate site.

The protein belongs to the ThiG family. As to quaternary structure, homotetramer. Forms heterodimers with either ThiH or ThiS.

The protein resides in the cytoplasm. It catalyses the reaction [ThiS sulfur-carrier protein]-C-terminal-Gly-aminoethanethioate + 2-iminoacetate + 1-deoxy-D-xylulose 5-phosphate = [ThiS sulfur-carrier protein]-C-terminal Gly-Gly + 2-[(2R,5Z)-2-carboxy-4-methylthiazol-5(2H)-ylidene]ethyl phosphate + 2 H2O + H(+). The protein operates within cofactor biosynthesis; thiamine diphosphate biosynthesis. In terms of biological role, catalyzes the rearrangement of 1-deoxy-D-xylulose 5-phosphate (DXP) to produce the thiazole phosphate moiety of thiamine. Sulfur is provided by the thiocarboxylate moiety of the carrier protein ThiS. In vitro, sulfur can be provided by H(2)S. In Nitratiruptor sp. (strain SB155-2), this protein is Thiazole synthase.